The primary structure comprises 196 residues: ATP-dependent Clp protease proteolytic subunit (196 aa).

Ser96 (nucleophile) is an active-site residue. Residue His121 is part of the active site.

Belongs to the peptidase S14 family. As to quaternary structure, fourteen ClpP subunits assemble into 2 heptameric rings which stack back to back to give a disk-like structure with a central cavity, resembling the structure of eukaryotic proteasomes.

It localises to the cytoplasm. It catalyses the reaction Hydrolysis of proteins to small peptides in the presence of ATP and magnesium. alpha-casein is the usual test substrate. In the absence of ATP, only oligopeptides shorter than five residues are hydrolyzed (such as succinyl-Leu-Tyr-|-NHMec, and Leu-Tyr-Leu-|-Tyr-Trp, in which cleavage of the -Tyr-|-Leu- and -Tyr-|-Trp bonds also occurs).. Functionally, cleaves peptides in various proteins in a process that requires ATP hydrolysis. Has a chymotrypsin-like activity. Plays a major role in the degradation of misfolded proteins. The chain is ATP-dependent Clp protease proteolytic subunit from Streptococcus pneumoniae (strain P1031).